We begin with the raw amino-acid sequence, 87 residues long: uncharacterized protein (87 aa).

A helical transmembrane segment spans residues 21 to 41 (LSSSLYSVAFFLFFFPNFLFF).

It localises to the membrane. This is an uncharacterized protein from Saccharomyces cerevisiae (strain ATCC 204508 / S288c) (Baker's yeast).